Here is a 264-residue protein sequence, read N- to C-terminus: Tryptophan synthase alpha chain (264 aa).

Active-site proton acceptor residues include Glu49 and Asp60.

Belongs to the TrpA family. Tetramer of two alpha and two beta chains.

It catalyses the reaction (1S,2R)-1-C-(indol-3-yl)glycerol 3-phosphate + L-serine = D-glyceraldehyde 3-phosphate + L-tryptophan + H2O. It functions in the pathway amino-acid biosynthesis; L-tryptophan biosynthesis; L-tryptophan from chorismate: step 5/5. Functionally, the alpha subunit is responsible for the aldol cleavage of indoleglycerol phosphate to indole and glyceraldehyde 3-phosphate. The sequence is that of Tryptophan synthase alpha chain from Geobacter sulfurreducens (strain ATCC 51573 / DSM 12127 / PCA).